A 179-amino-acid chain; its full sequence is SCAN domain-containing protein 1 (179 aa).

The disordered stretch occupies residues 1–107; it reads MAATEPILAT…AGSRLGPETF (107 aa). Over residues 52-80 the composition is skewed to low complexity; sequence SPNAAVPEAIPTPRAAASAALELPLGPAP. Positions 108 to 166 constitute an SCAN box domain; that stretch reads RQRFRQFRYQDAAGPREAFRQLRELSRQWLRPDIRTKEQIVEMLVQEQLLAILPEAARA.

Interacts with ZNF202.

It localises to the nucleus. Functionally, may regulate transcriptional activity. The polypeptide is SCAN domain-containing protein 1 (SCAND1) (Pan paniscus (Pygmy chimpanzee)).